A 394-amino-acid chain; its full sequence is S-adenosylmethionine synthase (394 aa).

His16 contacts ATP. Asp18 contributes to the Mg(2+) binding site. Glu44 contributes to the K(+) binding site. L-methionine contacts are provided by Glu57 and Gln100. The flexible loop stretch occupies residues 100–110 (QSPDIAQGVDA). Residues 172–174 (DAK), 239–240 (RF), Asp248, 254–255 (RK), Ala271, and Lys275 each bind ATP. Position 248 (Asp248) interacts with L-methionine. Position 279 (Lys279) interacts with L-methionine.

It belongs to the AdoMet synthase family. In terms of assembly, homotetramer; dimer of dimers. Mg(2+) is required as a cofactor. The cofactor is K(+).

The protein localises to the cytoplasm. The enzyme catalyses L-methionine + ATP + H2O = S-adenosyl-L-methionine + phosphate + diphosphate. The protein operates within amino-acid biosynthesis; S-adenosyl-L-methionine biosynthesis; S-adenosyl-L-methionine from L-methionine: step 1/1. Catalyzes the formation of S-adenosylmethionine (AdoMet) from methionine and ATP. The overall synthetic reaction is composed of two sequential steps, AdoMet formation and the subsequent tripolyphosphate hydrolysis which occurs prior to release of AdoMet from the enzyme. The sequence is that of S-adenosylmethionine synthase from Enterococcus faecalis (strain ATCC 700802 / V583).